Reading from the N-terminus, the 143-residue chain is Large ribosomal subunit protein uL11 (143 aa).

The protein belongs to the universal ribosomal protein uL11 family. As to quaternary structure, part of the ribosomal stalk of the 50S ribosomal subunit. Interacts with L10 and the large rRNA to form the base of the stalk. L10 forms an elongated spine to which L12 dimers bind in a sequential fashion forming a multimeric L10(L12)X complex. One or more lysine residues are methylated.

Functionally, forms part of the ribosomal stalk which helps the ribosome interact with GTP-bound translation factors. The polypeptide is Large ribosomal subunit protein uL11 (Marinobacter nauticus (strain ATCC 700491 / DSM 11845 / VT8) (Marinobacter aquaeolei)).